The chain runs to 875 residues: Valine--tRNA ligase (875 aa).

Residues 45–55 (PNVTGVLHMGH) carry the 'HIGH' region motif. The short motif at 524 to 528 (KMSKS) is the 'KMSKS' region element. K527 contacts ATP. A coiled-coil region spans residues 803-837 (VKSLIDKTKELIRLEKQLEKYKMLNISVSKKLENE).

It belongs to the class-I aminoacyl-tRNA synthetase family. ValS type 1 subfamily. In terms of assembly, monomer.

The protein localises to the cytoplasm. It carries out the reaction tRNA(Val) + L-valine + ATP = L-valyl-tRNA(Val) + AMP + diphosphate. Functionally, catalyzes the attachment of valine to tRNA(Val). As ValRS can inadvertently accommodate and process structurally similar amino acids such as threonine, to avoid such errors, it has a 'posttransfer' editing activity that hydrolyzes mischarged Thr-tRNA(Val) in a tRNA-dependent manner. This chain is Valine--tRNA ligase, found in Borreliella burgdorferi (strain ATCC 35210 / DSM 4680 / CIP 102532 / B31) (Borrelia burgdorferi).